We begin with the raw amino-acid sequence, 1242 residues long: DNA excision repair protein ERCC-6-like (1242 aa).

Residue Ser14 is modified to Phosphoserine. A TPR 1 repeat occupies 21–54 (YLRYVKEAKEATKNGDLEQALKLFNLAKDIFPNE). In terms of domain architecture, Helicase ATP-binding spans 109–277 (SLYRDGRRGG…WSLFDFACQG (169 aa)). 122 to 129 (DDMGLGKT) contributes to the ATP binding site. The short motif at 228-231 (DEAH) is the DEAH box element. Residues 466 to 626 (FLMDLLKKLR…PFRYFSKQEL (161 aa)) form the Helicase C-terminal domain. A phosphoserine mark is found at Ser755 and Ser773. Residue Thr815 is modified to Phosphothreonine. Phosphoserine is present on residues Ser963, Ser989, Ser998, and Ser1021. A Phosphothreonine modification is found at Thr1055. Ser1061, Ser1090, and Ser1110 each carry phosphoserine. The tract at residues 1103-1181 (EERLDNSSEA…LSDGQLVDSP (79 aa)) is disordered. Composition is skewed to basic and acidic residues over residues 1105-1121 (RLDN…HLEE) and 1130-1140 (APEHTKEDPSR). A compositionally biased stretch (polar residues) spans 1141–1156 (ETLSSENKSSQLSTSK). 2 positions are modified to phosphoserine: Ser1173 and Ser1180. One copy of the TPR 2 repeat lies at 1192–1225 (YDTLVLHGKELKECGKIQEALDCLVKALDIKSSD).

This sequence belongs to the SNF2/RAD54 helicase family. Interacts with PLK1, which phosphorylates it. Both proteins are mutually dependent on each other for correct subcellular localization. Interacts (via N-terminal TPR repeat) with BEND3 (via BEN domains 1 and 3); the interaction is direct. Phosphorylation by PLK1 prevents the association with chromosome arms and restricts its localization to the kinetochore-centromere region.

The protein localises to the chromosome. The protein resides in the centromere. It is found in the kinetochore. The enzyme catalyses ATP + H2O = ADP + phosphate + H(+). Functionally, DNA helicase that acts as a tension sensor that associates with catenated DNA which is stretched under tension until it is resolved during anaphase. Functions as ATP-dependent DNA translocase. Can promote Holliday junction branch migration (in vitro). This chain is DNA excision repair protein ERCC-6-like (ERCC6L), found in Bos taurus (Bovine).